Reading from the N-terminus, the 90-residue chain is Defensin-like protein 178 (90 aa).

A signal peptide spans 1 to 23 (MAKATSSLVVPIIFLVIFALVEQ). Intrachain disulfides connect C27–C66, C36–C55, C39–C60, and C43–C62.

This sequence belongs to the DEFL family.

Its subcellular location is the secreted. The protein is Defensin-like protein 178 (LCR64) of Arabidopsis thaliana (Mouse-ear cress).